Here is a 663-residue protein sequence, read N- to C-terminus: DNA ligase (663 aa).

NAD(+)-binding positions include 33–37 (DYSYD), 82–83 (SI), and glutamate 112. Lysine 114 functions as the N6-AMP-lysine intermediate in the catalytic mechanism. Residues arginine 135, glutamate 171, lysine 285, and lysine 309 each contribute to the NAD(+) site. Zn(2+) contacts are provided by cysteine 403, cysteine 406, cysteine 419, and cysteine 424. A BRCT domain is found at 581–663 (DKEAPLQGKV…LRILDAKSVS (83 aa)).

It belongs to the NAD-dependent DNA ligase family. LigA subfamily. The cofactor is Mg(2+). It depends on Mn(2+) as a cofactor.

It carries out the reaction NAD(+) + (deoxyribonucleotide)n-3'-hydroxyl + 5'-phospho-(deoxyribonucleotide)m = (deoxyribonucleotide)n+m + AMP + beta-nicotinamide D-nucleotide.. DNA ligase that catalyzes the formation of phosphodiester linkages between 5'-phosphoryl and 3'-hydroxyl groups in double-stranded DNA using NAD as a coenzyme and as the energy source for the reaction. It is essential for DNA replication and repair of damaged DNA. This Chlamydia trachomatis serovar A (strain ATCC VR-571B / DSM 19440 / HAR-13) protein is DNA ligase.